The chain runs to 398 residues: Lipase member N (398 aa).

An N-terminal signal peptide occupies residues 1-18 (MMWLLLTTTCLICGTLNA). The AB hydrolase-1 domain occupies 79 to 379 (PVVYMQHALF…DWNHFDFVWG (301 aa)). Ser-173 serves as the catalytic Nucleophile. Cysteines 247 and 256 form a disulfide. Residue Asn-272 is glycosylated (N-linked (GlcNAc...) asparagine). Catalysis depends on charge relay system residues Asp-344 and His-373.

The protein belongs to the AB hydrolase superfamily. Lipase family. As to expression, highly expressed in the epidermis in the granular keratinocytes. Also detected in other tissues, although at much lower levels, including lung and spleen.

The protein localises to the secreted. The catalysed reaction is a sterol ester + H2O = a sterol + a fatty acid + H(+). The enzyme catalyses a triacylglycerol + H2O = a 1,2-diacylglycerol + a fatty acid + H(+). It catalyses the reaction a triacylglycerol + H2O = a diacylglycerol + a fatty acid + H(+). It carries out the reaction a cholesterol ester + H2O = cholesterol + a fatty acid + H(+). Functionally, plays a highly specific role in the last step of keratinocyte differentiation. Contains two distinct domains: the alpha/beta hydrolase fold and the abhydrolase-associated lipase region, also features the consensus sequence of the active site of a genuine lipase. May have an essential function in lipid metabolism of the most differentiated epidermal layers. The polypeptide is Lipase member N (LIPN) (Homo sapiens (Human)).